The sequence spans 311 residues: Protoheme IX farnesyltransferase (311 aa).

The next 9 helical transmembrane spans lie at Val32–Asn52, Pro53–Leu73, Phe104–Trp124, Phe125–Leu145, Ile153–Gly173, Phe180–Phe200, Lys224–Gly244, Leu245–Ala265, and Phe285–Val305.

The protein belongs to the UbiA prenyltransferase family. Protoheme IX farnesyltransferase subfamily.

It is found in the cell inner membrane. The catalysed reaction is heme b + (2E,6E)-farnesyl diphosphate + H2O = Fe(II)-heme o + diphosphate. It participates in porphyrin-containing compound metabolism; heme O biosynthesis; heme O from protoheme: step 1/1. Functionally, converts heme B (protoheme IX) to heme O by substitution of the vinyl group on carbon 2 of heme B porphyrin ring with a hydroxyethyl farnesyl side group. In Bartonella tribocorum (strain CIP 105476 / IBS 506), this protein is Protoheme IX farnesyltransferase.